A 314-amino-acid chain; its full sequence is tRNA pseudouridine synthase B (314 aa).

Residue D47 is the Nucleophile of the active site.

The protein belongs to the pseudouridine synthase TruB family. Type 1 subfamily.

The enzyme catalyses uridine(55) in tRNA = pseudouridine(55) in tRNA. Functionally, responsible for synthesis of pseudouridine from uracil-55 in the psi GC loop of transfer RNAs. The protein is tRNA pseudouridine synthase B of Vibrio vulnificus (strain CMCP6).